A 150-amino-acid polypeptide reads, in one-letter code: UPF0756 membrane protein Asuc_1151 (150 aa).

4 consecutive transmembrane segments (helical) span residues 1–21 (MSLH…LGVL), 52–72 (YGLN…IVAG), 82–102 (LLHW…WLAG), and 123–143 (ILGV…AGIL).

Belongs to the UPF0756 family.

The protein localises to the cell membrane. This Actinobacillus succinogenes (strain ATCC 55618 / DSM 22257 / CCUG 43843 / 130Z) protein is UPF0756 membrane protein Asuc_1151.